The chain runs to 1032 residues: Connector enhancer of kinase suppressor of ras 2 (1032 aa).

The region spanning 11–76 (WSPSQVVDWM…LEAVDLLCAL (66 aa)) is the SAM domain. Serine 12 is subject to Phosphoserine. The region spanning 84–178 (NLKTLSHKLN…TIVQQDCTVY (95 aa)) is the CRIC domain. Residues 215 to 297 (VIQLANIKPS…GVILTLKKRP (83 aa)) form the PDZ domain. Over residues 324 to 340 (RSPTSSVATPSSTISTP) the composition is skewed to low complexity. Positions 324–349 (RSPTSSVATPSSTISTPTKRDSSALQ) are disordered. Positions 332 to 515 (TPSSTISTPT…PTHYSLLPSL (184 aa)) constitute a DUF1170 domain. Phosphoserine occurs at positions 338 and 390. Positions 480 to 509 (EEYMFQRNSKKDTGKKSKKKGDKSTSPTHY) are disordered. In terms of domain architecture, PH spans 570-669 (RGDCEGWLWK…WLNRINMLTA (100 aa)). The disordered stretch occupies residues 682 to 766 (DYWSESDKEE…PIRKTASQRR (85 aa)). Position 683 is a phosphotyrosine (tyrosine 683). A compositionally biased stretch (acidic residues) spans 683–693 (YWSESDKEEAD). Residues serine 685 and serine 687 each carry the phosphoserine modification. The span at 701–714 (DSPPPPYDTYPRPP) shows a compositional bias: pro residues. Residues 730–740 (LSSTETSQSQS) are compositionally biased toward low complexity. Residues serine 756 and serine 767 each carry the phosphoserine modification. Positions 866–900 (DPQDDIQPPEVEEEEEEEEEEAAGENIGEKNENRE) are disordered. Residues 874–917 (PEVEEEEEEEEEEAAGENIGEKNENREEKLGDSLQDLYRALEEA) are a coiled coil. Residues 875–888 (EVEEEEEEEEEEAA) show a composition bias toward acidic residues. Position 906 is a phosphoserine (serine 906).

It belongs to the CNKSR family. As to quaternary structure, interacts with RAF1, RAB2L and RAL GTPase proteins. Interacts with DLG4 and AIP1. Post-translationally, phosphorylated on tyrosine. As to expression, expressed in neurons and localized in the cell body and neurites.

The protein localises to the cytoplasm. Its subcellular location is the membrane. Its function is as follows. May function as an adapter protein or regulator of Ras signaling pathways, in synaptic junctions. This chain is Connector enhancer of kinase suppressor of ras 2 (Cnksr2), found in Rattus norvegicus (Rat).